Consider the following 513-residue polypeptide: Nucleolar GTP-binding protein 2 (513 aa).

Positions 1 to 23 (MGTGKKEKQRRIREGNTKDGNLR) are disordered. A CP-type G domain is found at 211–372 (WNELYKVIDS…LIDCPGIVPP (162 aa)). Residues 321 to 328 (GYPNTGKS) and 365 to 369 (DCPGI) contribute to the GTP site. A disordered region spans residues 459 to 513 (GKIPWFVPPPEKDKIEEKEPGDKKRPAEENQEDQEEEEKEQEEQEEPVSKKAKKE). Residues 468–486 (PEKDKIEEKEPGDKKRPAE) show a composition bias toward basic and acidic residues. Positions 487–504 (ENQEDQEEEEKEQEEQEE) are enriched in acidic residues.

This sequence belongs to the TRAFAC class YlqF/YawG GTPase family. NOG2 subfamily.

Its subcellular location is the nucleus. The protein localises to the nucleolus. In terms of biological role, GTPase that associates with pre-60S ribosomal subunits in the nucleolus and is required for their nuclear export and maturation. This is Nucleolar GTP-binding protein 2 (NOG2) from Kluyveromyces lactis (strain ATCC 8585 / CBS 2359 / DSM 70799 / NBRC 1267 / NRRL Y-1140 / WM37) (Yeast).